The chain runs to 396 residues: Lysophospholipid transporter LplT (396 aa).

Topologically, residues 1–17 are periplasmic; sequence MSESVHTNTSLWSKGMK. The helical transmembrane segment at 18–38 threads the bilayer; it reads AVIVAQFLSAFGDNALLFATL. Over 39–52 the chain is Cytoplasmic; sequence ALLKAQFYPEWSQP. A helical transmembrane segment spans residues 53 to 73; sequence ILQMVFVGAYILLAPFVGQVA. The Periplasmic portion of the chain corresponds to 74-90; that stretch reads DSFAKGRVMMFANGLKL. The chain crosses the membrane as a helical span at residues 91–111; that stretch reads LGAASICFGINPFLGYTLVGV. Residues 112-144 are Cytoplasmic-facing; sequence GAAAYSPAKYGILGELTTGSKLVKANGLMEASA. Residues 145–165 traverse the membrane as a helical segment; it reads IAAILLGSVAGGVLADWHVLV. Position 166 (Ala166) is a topological domain, periplasmic. A helical transmembrane segment spans residues 167-187; that stretch reads LAACALAYGGAVVANIYIPKL. Residues 188–225 are Cytoplasmic-facing; sequence AARPGQSWNLINMTRSFLNACTSLWCNGETRFSLVGTS. A helical transmembrane segment spans residues 226 to 246; the sequence is LFWGAGVTLRFLLVLWVPVAL. At 247 to 255 the chain is on the periplasmic side; that stretch reads GITDNATPT. The chain crosses the membrane as a helical span at residues 256 to 276; it reads YLNAMVAIGIVVGAGAAAKLV. The Cytoplasmic portion of the chain corresponds to 277-279; that stretch reads TLE. The helical transmembrane segment at 280–300 threads the bilayer; sequence TVSRCMPAGILIGVVVPIFSL. Topologically, residues 301-303 are periplasmic; the sequence is QHE. The chain crosses the membrane as a helical span at residues 304–324; it reads LLPAYALLMLIGVLGGFFVVP. Residues 325–342 lie on the Cytoplasmic side of the membrane; it reads LNALLQERGKKSVGAGNA. Residues 343–363 form a helical membrane-spanning segment; the sequence is IAVQNLGENSAMLLMLGIYSL. Residues 364–365 lie on the Periplasmic side of the membrane; the sequence is AV. A helical membrane pass occupies residues 366–386; the sequence is MVGIPVVPIGIGFGALFALAI. The Cytoplasmic segment spans residues 387 to 396; that stretch reads TALWIWQRRH.

This sequence belongs to the major facilitator superfamily. LplT (TC 2.A.1.42) family.

The protein localises to the cell inner membrane. In terms of biological role, catalyzes the facilitated diffusion of 2-acyl-glycero-3-phosphoethanolamine (2-acyl-GPE) into the cell. The protein is Lysophospholipid transporter LplT of Shigella flexneri.